A 538-amino-acid polypeptide reads, in one-letter code: CTP synthase (538 aa).

Residues 1–267 form an amidoligase domain region; the sequence is MDRAKFIFVT…LTPIARRFNL (267 aa). Ser15 is a CTP binding site. Residue Ser15 coordinates UTP. ATP is bound by residues 16–21 and Asp73; that span reads SLGKGI. Residues Asp73 and Glu141 each coordinate Mg(2+). CTP is bound by residues 148-150, 188-193, and Lys224; these read DME and KTKPTQ. Residues 188-193 and Lys224 each bind UTP; that span reads KTKPTQ. One can recognise a Glutamine amidotransferase type-1 domain in the interval 292-538; it reads KIGFVGKYLS…DFIKSALSKS (247 aa). Gly351 provides a ligand contact to L-glutamine. Residue Cys378 is the Nucleophile; for glutamine hydrolysis of the active site. L-glutamine-binding positions include 379-382, Glu402, and Arg469; that span reads LGMQ. Active-site residues include His513 and Glu515.

It belongs to the CTP synthase family. In terms of assembly, homotetramer.

The enzyme catalyses UTP + L-glutamine + ATP + H2O = CTP + L-glutamate + ADP + phosphate + 2 H(+). It carries out the reaction L-glutamine + H2O = L-glutamate + NH4(+). The catalysed reaction is UTP + NH4(+) + ATP = CTP + ADP + phosphate + 2 H(+). Its pathway is pyrimidine metabolism; CTP biosynthesis via de novo pathway; CTP from UDP: step 2/2. With respect to regulation, allosterically activated by GTP, when glutamine is the substrate; GTP has no effect on the reaction when ammonia is the substrate. The allosteric effector GTP functions by stabilizing the protein conformation that binds the tetrahedral intermediate(s) formed during glutamine hydrolysis. Inhibited by the product CTP, via allosteric rather than competitive inhibition. Its function is as follows. Catalyzes the ATP-dependent amination of UTP to CTP with either L-glutamine or ammonia as the source of nitrogen. Regulates intracellular CTP levels through interactions with the four ribonucleotide triphosphates. The chain is CTP synthase from Helicobacter pylori (strain HPAG1).